A 203-amino-acid chain; its full sequence is Large ribosomal subunit protein bL25 (203 aa).

Positions 1–21 (MMENLQVNQREKKTRHSSRQC) are disordered. Basic residues predominate over residues 12–21 (KKTRHSSRQC).

This sequence belongs to the bacterial ribosomal protein bL25 family. CTC subfamily. As to quaternary structure, part of the 50S ribosomal subunit; part of the 5S rRNA/L5/L18/L25 subcomplex. Contacts the 5S rRNA. Binds to the 5S rRNA independently of L5 and L18.

This is one of the proteins that binds to the 5S RNA in the ribosome where it forms part of the central protuberance. This is Large ribosomal subunit protein bL25 from Clostridium perfringens (strain 13 / Type A).